We begin with the raw amino-acid sequence, 368 residues long: Phosphoribosylformylglycinamidine cyclo-ligase (368 aa).

It belongs to the AIR synthase family.

The protein localises to the cytoplasm. The enzyme catalyses 2-formamido-N(1)-(5-O-phospho-beta-D-ribosyl)acetamidine + ATP = 5-amino-1-(5-phospho-beta-D-ribosyl)imidazole + ADP + phosphate + H(+). Its pathway is purine metabolism; IMP biosynthesis via de novo pathway; 5-amino-1-(5-phospho-D-ribosyl)imidazole from N(2)-formyl-N(1)-(5-phospho-D-ribosyl)glycinamide: step 2/2. The chain is Phosphoribosylformylglycinamidine cyclo-ligase from Chelativorans sp. (strain BNC1).